A 411-amino-acid polypeptide reads, in one-letter code: uncharacterized protein (411 aa).

The signal sequence occupies residues 1–21 (MHSRILLLLLMFAFNVGLINC). Positions 28–67 (PQSNCKIRCENGGMCVFDLERPDFHSCICLLGVYTGDRCQ) constitute an EGF-like domain. 3 disulfides stabilise this stretch: Cys32/Cys42, Cys36/Cys54, and Cys56/Cys66. Residues 78 to 97 (TATSDETSHPMNIQHQQSQA) show a composition bias toward polar residues. Disordered regions lie at residues 78–312 (TATS…EPIR) and 337–375 (HPIE…EYGM). The span at 100-230 (DDARRRDDER…VEKELNDKRT (131 aa)) shows a compositional bias: basic and acidic residues. Residues 237–266 (FEYEGGDEEYPQVAEKEDEYDEGYETDNTE) show a composition bias toward acidic residues. Low complexity predominate over residues 267 to 276 (DVTITTTKTT).

This is an uncharacterized protein from Caenorhabditis elegans.